Reading from the N-terminus, the 445-residue chain is Probable glycine dehydrogenase (decarboxylating) subunit 1 (445 aa).

It belongs to the GcvP family. N-terminal subunit subfamily. In terms of assembly, the glycine cleavage system is composed of four proteins: P, T, L and H. In this organism, the P 'protein' is a heterodimer of two subunits.

The enzyme catalyses N(6)-[(R)-lipoyl]-L-lysyl-[glycine-cleavage complex H protein] + glycine + H(+) = N(6)-[(R)-S(8)-aminomethyldihydrolipoyl]-L-lysyl-[glycine-cleavage complex H protein] + CO2. Functionally, the glycine cleavage system catalyzes the degradation of glycine. The P protein binds the alpha-amino group of glycine through its pyridoxal phosphate cofactor; CO(2) is released and the remaining methylamine moiety is then transferred to the lipoamide cofactor of the H protein. This is Probable glycine dehydrogenase (decarboxylating) subunit 1 from Chlorobium chlorochromatii (strain CaD3).